Reading from the N-terminus, the 37-residue chain is Large ribosomal subunit protein bL36A (37 aa).

This sequence belongs to the bacterial ribosomal protein bL36 family.

The chain is Large ribosomal subunit protein bL36A from Methylobacillus flagellatus (strain ATCC 51484 / DSM 6875 / VKM B-1610 / KT).